Consider the following 284-residue polypeptide: Shikimate dehydrogenase (NADP(+)) (284 aa).

Residues 20 to 22 and Ser-67 each bind shikimate; that span reads SIS. Catalysis depends on Lys-71, which acts as the Proton acceptor. An NADP(+)-binding site is contributed by Asp-83. Shikimate is bound by residues Asn-92 and Asp-107. NADP(+) contacts are provided by residues 129 to 133 and Ile-227; that span reads GAGGA. Tyr-229 lines the shikimate pocket. An NADP(+)-binding site is contributed by Gly-250.

This sequence belongs to the shikimate dehydrogenase family. In terms of assembly, homodimer.

It catalyses the reaction shikimate + NADP(+) = 3-dehydroshikimate + NADPH + H(+). Its pathway is metabolic intermediate biosynthesis; chorismate biosynthesis; chorismate from D-erythrose 4-phosphate and phosphoenolpyruvate: step 4/7. Its function is as follows. Involved in the biosynthesis of the chorismate, which leads to the biosynthesis of aromatic amino acids. Catalyzes the reversible NADPH linked reduction of 3-dehydroshikimate (DHSA) to yield shikimate (SA). The polypeptide is Shikimate dehydrogenase (NADP(+)) (Streptococcus pneumoniae (strain ATCC 700669 / Spain 23F-1)).